A 423-amino-acid chain; its full sequence is Putative competence-damage inducible protein (423 aa).

The protein belongs to the CinA family.

The protein is Putative competence-damage inducible protein of Streptococcus pyogenes serotype M4 (strain MGAS10750).